We begin with the raw amino-acid sequence, 577 residues long: Aspartate--tRNA(Asp/Asn) ligase (577 aa).

An L-aspartate-binding site is contributed by Glu171. Positions 195 to 198 are aspartate; the sequence is QLFK. Arg217 is a binding site for L-aspartate. ATP is bound by residues 217 to 219 and Gln226; that span reads RDE. His444 is a binding site for L-aspartate. ATP is bound at residue Glu474. Residue Arg481 participates in L-aspartate binding. 526 to 529 contributes to the ATP binding site; the sequence is GFDR.

This sequence belongs to the class-II aminoacyl-tRNA synthetase family. Type 1 subfamily. As to quaternary structure, homodimer.

It is found in the cytoplasm. The catalysed reaction is tRNA(Asx) + L-aspartate + ATP = L-aspartyl-tRNA(Asx) + AMP + diphosphate. In terms of biological role, aspartyl-tRNA synthetase with relaxed tRNA specificity since it is able to aspartylate not only its cognate tRNA(Asp) but also tRNA(Asn). Reaction proceeds in two steps: L-aspartate is first activated by ATP to form Asp-AMP and then transferred to the acceptor end of tRNA(Asp/Asn). This chain is Aspartate--tRNA(Asp/Asn) ligase, found in Helicobacter pylori (strain P12).